We begin with the raw amino-acid sequence, 505 residues long: Deoxyguanosinetriphosphate triphosphohydrolase (505 aa).

The HD domain occupies 66-273 (RLTHSMEVQQ…MEAADDISYC (208 aa)).

Belongs to the dGTPase family. Type 1 subfamily. Homotetramer. Mg(2+) is required as a cofactor.

It catalyses the reaction dGTP + H2O = 2'-deoxyguanosine + triphosphate + H(+). Its function is as follows. dGTPase preferentially hydrolyzes dGTP over the other canonical NTPs. The sequence is that of Deoxyguanosinetriphosphate triphosphohydrolase from Escherichia fergusonii (strain ATCC 35469 / DSM 13698 / CCUG 18766 / IAM 14443 / JCM 21226 / LMG 7866 / NBRC 102419 / NCTC 12128 / CDC 0568-73).